The chain runs to 131 residues: Snaclec coagulation factor IX/factor X-binding protein subunit A (131 aa).

The region spanning aspartate 1–isoleucine 131 is the C-type lectin domain. 3 disulfides stabilise this stretch: cysteine 2–cysteine 13, cysteine 30–cysteine 129, and cysteine 104–cysteine 121. Ca(2+) is bound by residues serine 41, glutamate 43, and glutamate 47. Glutamate 130 is a Ca(2+) binding site.

It belongs to the snaclec family. In terms of assembly, heterodimer of subunits A and B; disulfide-linked. In terms of tissue distribution, expressed by the venom gland.

It is found in the secreted. In terms of biological role, anticoagulant protein which binds to coagulation factor IX (F9) and coagulation factor X (F10) in the presence of calcium. It may bind the gamma-carboxyglutamic acid-domain regions of factors with a 1 to 1 stoichiometry. The dissociation constant (K(d)) are 6.6 nM for factor IX (F9) and 125 nM for factor X (F10). Does not bind carbohydrates. The chain is Snaclec coagulation factor IX/factor X-binding protein subunit A from Echis carinatus (Saw-scaled viper).